The following is a 532-amino-acid chain: Omega-hydroxyceramide transacylase (532 aa).

Positions 16–185 (ISFSGSGFLS…TGMQPCAFWT (170 aa)) constitute a PNPLA domain. The GXSXG motif lies at 51–55 (GTSAG). The active-site Nucleophile is Ser-53. Residue Asp-172 is the Proton acceptor of the active site. A DGA/G motif is present at residues 172-174 (DGG). Disordered regions lie at residues 290–457 (PERS…ELGQ) and 489–532 (VTES…SKVQ). Basic and acidic residues predominate over residues 310–322 (PHKEWVPKGDGRG). Composition is skewed to low complexity over residues 380–389 (PPSSTPGSSL) and 397–411 (SPLS…SGSP). Over residues 517–532 (GFPRHSGSKKPSSKVQ) the composition is skewed to basic residues.

In terms of tissue distribution, expressed in the digestive system. Expressed in the epidermis of skin keratinocytes. Strongly expressed in the granular layer. Expressed in the upper epidermis and eccrine sweat glands of the dermis and in the region of keratin filament bundles, which is more pronounced in upper epidermal layers and in the lower cornified layers.

The protein localises to the cytoplasm. The enzyme catalyses an N-(omega-hydroxy-ultra-long chain fatty acyl)-sphingoid base + a (9Z,12Z)-octadecadienoyl-containing triacyl-sn-glycerol = an N-[omega-(9Z,12Z-octadecadienoyloxy)-O-ultra-long chain fatty acyl]-sphingoid base + a diacylglycerol. It catalyses the reaction an N-(omega-hydroxy-ultra-long chain fatty acyl)-sphing-4-enine + a (9Z,12Z)-octadecadienoyl-containing triacyl-sn-glycerol = an N-(omega-(9Z,12Z-octadecadienoyloxy)-ultra-long chain fatty acyl)-sphing-4-enine + a diacylglycerol. It carries out the reaction N-(30-hydroxytriacontanoyl)-sphing-4-enine + 1,2,3-tri-(9Z,12Z)-octadecadienoylglycerol = N-[30-(9Z,12Z-octadecadienoyloxy)-triacontanoyl]-sphing-4-enine + di-(9Z,12Z)-octadecadienoylglycerol. The catalysed reaction is N-(28-hydroxyoctacosanoyl)-sphing-4-enine + a (9Z,12Z)-octadecadienoyl-containing triacyl-sn-glycerol = N-(28-(9Z,12Z-octadecadienoyloxy)-octacosanoyl)-sphing-4-enine + a diacylglycerol. The enzyme catalyses N-(32-hydroxydotriacontanoyl)-sphing-4-enine + a (9Z,12Z)-octadecadienoyl-containing triacyl-sn-glycerol = N-(32-(9Z,12Z-octadecadienoyloxy)-dotricontanoyl)-sphing-4-enine + a diacylglycerol. It catalyses the reaction N-(32-hydroxydotriacontenoyl)-sphing-4-enine + a (9Z,12Z)-octadecadienoyl-containing triacyl-sn-glycerol = an N-(32-(9Z,12Z-octadecadienoyloxy)-dotriacontenoyl)-sphing-4-enine + a diacylglycerol. It carries out the reaction an N-(34-hydroxytetratriacontenoyl)-sphing-4-enine + a (9Z,12Z)-octadecadienoyl-containing triacyl-sn-glycerol = an N-(34-(9Z,12Z-octadecadienoyloxy)-tetratriacontenoyl)-sphing-4-enine + a diacylglycerol. The catalysed reaction is an N-(34-hydroxytetratriacontadienoyl)-sphing-4-enine + a (9Z,12Z)-octadecadienoyl-containing triacyl-sn-glycerol = an N-(34-(9Z,12Z-octadecadienoyloxy)-tetratriacontadienoyl)-sphing-4-enine + a diacylglycerol. The enzyme catalyses an N-(36-hydroxyhexatriacontenoyl)-sphing-4-enine + a (9Z,12Z)-octadecadienoyl-containing triacyl-sn-glycerol = an N-(36-(9Z,12Z-octadecadienoyloxy)-hexatriacontenoyl)-sphing-4-enine + a diacylglycerol. It catalyses the reaction an N-(36-hydroxyhexatriacontadienoyl)-sphing-4-enine + a (9Z,12Z)-octadecadienoyl-containing triacyl-sn-glycerol = an N-(36-(9Z,12Z-octadecadienoyloxy)-hexatriacontadienoyl)-sphing-4-enine + a diacylglycerol. It carries out the reaction an N-(38-hydroxyoctatriacontenoyl)-sphing-4-enine + a (9Z,12Z)-octadecadienoyl-containing triacyl-sn-glycerol = an N-(38-(9Z,12Z-octadecadienoyloxy)-octatriacontenoyl)-sphing-4-enine + a diacylglycerol. Its function is as follows. Omega-hydroxyceramide transacylase involved in the synthesis of omega-O-acylceramides (esterified omega-hydroxyacyl-sphingosine; EOS), which are extremely hydrophobic lipids involved in skin barrier formation. Catalyzes the last step of the synthesis of omega-O-acylceramides by transferring linoleic acid from triglycerides to an omega-hydroxyceramide. Omega-O-acylceramides, are required for the biogenesis of lipid lamellae in the stratum corneum and the formation of the cornified lipid envelope which are essential for the epidermis barrier function. These lipids also play a role in keratinocyte differentiation. May also act on omega-hydroxylated ultra-long chain fatty acids (omega-OH ULCFA) and acylglucosylceramides (GlcEOS). This is Omega-hydroxyceramide transacylase from Homo sapiens (Human).